We begin with the raw amino-acid sequence, 101 residues long: NAD(P)H-quinone oxidoreductase subunit 4L, chloroplastic (101 aa).

3 helical membrane passes run methionine 2–isoleucine 22, methionine 32–phenylalanine 52, and isoleucine 61–valine 81.

Belongs to the complex I subunit 4L family. As to quaternary structure, NDH is composed of at least 16 different subunits, 5 of which are encoded in the nucleus.

Its subcellular location is the plastid. It localises to the chloroplast thylakoid membrane. The enzyme catalyses a plastoquinone + NADH + (n+1) H(+)(in) = a plastoquinol + NAD(+) + n H(+)(out). It carries out the reaction a plastoquinone + NADPH + (n+1) H(+)(in) = a plastoquinol + NADP(+) + n H(+)(out). NDH shuttles electrons from NAD(P)H:plastoquinone, via FMN and iron-sulfur (Fe-S) centers, to quinones in the photosynthetic chain and possibly in a chloroplast respiratory chain. The immediate electron acceptor for the enzyme in this species is believed to be plastoquinone. Couples the redox reaction to proton translocation, and thus conserves the redox energy in a proton gradient. The protein is NAD(P)H-quinone oxidoreductase subunit 4L, chloroplastic of Citrus sinensis (Sweet orange).